The sequence spans 304 residues: DCN1-like protein 3 (304 aa).

2 disordered regions span residues 1–87 and 285–304; these read MGQC…EESS and VEGR…EEQT. Glycine 2 carries N-myristoyl glycine lipidation. Residues 86 to 278 enclose the DCUN1 domain; that stretch reads SSLQRLEELF…LFDTFVEWEM (193 aa).

As to quaternary structure, part of a complex containing DCUN1D3, CUL3 and RBX1. Interacts (via the DCUN1 domain) with the unneddylated cullins: interacts with CUL1, CUL2, CUL3, CUL4A, CUL4B and CUL5; these interactions promote the cullin neddylation and the identity of the cullin dictates the affinity of the interaction. Interacts preferentially with CUL3; this interaction triggers the relocalization of CUL3 to the cell membrane where CUL3 is neddylated. Interacts (via DCUN1 domain) with RBX1. May also interact with regulators or subunits of cullin-RING ligases such as RNF7, ELOB and DDB1; these interactions are bridged by cullins. Interacts (via DCUN1 domain) with CAND1; this interaction is bridged by cullins and strongly inhibits cullin neddylation. These CAND-cullin-DCNL complexes can only be neddylated in the presence of a substrate adapter. Interacts (via DCUN1 domain) with the N-terminally acetylated form of UBE2M and UBE2F.

It is found in the cell membrane. The protein localises to the cytoplasm. Its subcellular location is the nucleus. The protein resides in the perinuclear region. Contributes to the neddylation of all cullins by transferring NEDD8 from N-terminally acetylated NEDD8-conjugating E2s enzyme to different cullin C-terminal domain-RBX complexes and may play a role in the cell cycle progression by regulating the SCF ubiquitin E3 ligase complex, after UV damage. At the cell membrane, can promote and as well inhibit cullins neddylation. The sequence is that of DCN1-like protein 3 from Rattus norvegicus (Rat).